A 76-amino-acid polypeptide reads, in one-letter code: MQYKTFLVIFMAYLLVTHEAEAIWSFLIKAATKLLPSLFGGGKKDSSKRKRDVEDFFDPYQRDLDLELERLLSQLQ.

Positions 1-22 (MQYKTFLVIFMAYLLVTHEAEA) are cleaved as a signal peptide. The propeptide occupies 47-76 (SKRKRDVEDFFDPYQRDLDLELERLLSQLQ).

The protein belongs to the non-disulfide-bridged peptide (NDBP) superfamily. Medium-length antimicrobial peptide (group 3) family. In terms of tissue distribution, expressed by the venom gland.

It localises to the secreted. The protein resides in the target cell membrane. Its function is as follows. Peptide that shows antimicrobial activity, moderate cytolysis on eukaryote cells and interference with DNA synthesis. Has potent activity against Gram-positive bacteria and moderate activity against Gram-negative bacteria, as well as moderate activity against fungi. Acts by inducing bacterial membrane disruption. Uses multiple modes of action depending on the membrane lipid composition. Uses a toroidal pore mechanism against the prokaryotic like membrane and forms hexagonal phase non-lamellar structures in eukaryotic-like membrane. Shows activity against B.subtilis (MIC=4 ug/ml), S.epidermidis (MIC=8 ug/ml), S.aureus (MIC=8 ug/ml), E.coli (MIC=64 ug/ml), K.pneumoniae (MIC=128 ug/ml), P.aeruginosa (MIC=256 ug/ml), and C.albicans (MIC=32 ug/ml). Shows moderate hemolysis activity. The sequence is that of Antimicrobial peptide Smp24 from Scorpio palmatus (Israeli golden scorpion).